The chain runs to 61 residues: Large ribosomal subunit protein uL30 (61 aa).

The protein belongs to the universal ribosomal protein uL30 family. In terms of assembly, part of the 50S ribosomal subunit.

The chain is Large ribosomal subunit protein uL30 from Chlorobium limicola (strain DSM 245 / NBRC 103803 / 6330).